Here is a 191-residue protein sequence, read N- to C-terminus: MKIILASKSPRRIELLKLLKIDFEVIPSNIDENISEKDPKLLAEKLSYLKAMSIKKDGVVLAADTVVTLDKEIFGKPRDYKDAFRMLKSLSGKWHTVITGVTIKFKDEVITFSEKTNVKFKNLSKELIEFYINTAKPFDKAGGYGIQELGSVLVEKIEGDYFNVVGLPISKVWDILWDRGMIDASKGEINK.

Residue D64 is the Proton acceptor of the active site.

It belongs to the Maf family. YhdE subfamily. The cofactor is a divalent metal cation.

The protein resides in the cytoplasm. The catalysed reaction is dTTP + H2O = dTMP + diphosphate + H(+). The enzyme catalyses UTP + H2O = UMP + diphosphate + H(+). Nucleoside triphosphate pyrophosphatase that hydrolyzes dTTP and UTP. May have a dual role in cell division arrest and in preventing the incorporation of modified nucleotides into cellular nucleic acids. This chain is dTTP/UTP pyrophosphatase, found in Thermosipho africanus (strain TCF52B).